A 518-amino-acid polypeptide reads, in one-letter code: MSLQTIGIAAVAVVYFLIRYFNRTDIPKIKGLPEVPGVPIFGNLIQLGDQHATVAQKWAKKFGPVFQVRMGNKRVVFANTFDSVRQLWIKDQSALISRPTFHTFHSVVSSSQGFTIGTSPWDESCKRRRKAAATALNRPATQSYMPIIDLESMSSIRELLRDSANGTMDINPTAYFQRFALNTSLTLNYGIRIEGNVNDELLREIVDVERGVSNFRSTSNQWQDYIPLLRIFPKMNREAEEFRVRRDKYLTYLLDVLKDRIAKGTDKPCITGNILKDPEAKLNDAEIKSICLTMVSAGLDTVPGNLIMGIAYLASEDGQRIQKRAHDEIMKVYPDGDAWEKCLLEEKVPYVTALVKETLRFWTVIPICLPRENTKDIVWNGAVIPKGTTFFMNAYAADYDETHFTNPHAFEPERYLTASSDGSGTPHYGYGAGSRMCAGSHLANRELFTAYVRLITAFTMHPAKRAEDRPILDAIECNAIPTALTTEPKPFKVGFKPRDPVLVRKWIAESEERTKHLN.

Cysteine 437 contacts heme.

Belongs to the cytochrome P450 family.

It carries out the reaction 2-phenylacetate + reduced [NADPH--hemoprotein reductase] + O2 = (2-hydroxyphenyl)acetate + oxidized [NADPH--hemoprotein reductase] + H2O + H(+). The protein operates within aromatic compound metabolism; phenylacetate degradation. Catalyzes the hydroxylation of phenylacetate to 2-hydroxyphenylacetate in the homogentisate pathway. The homogentisate pathway is used to catabolize phenylacetate and use it as a carbon source. Can also catalyze the hydroxylation of 3-hydroxyphenylacetate to 2,5-dihydroxyphenylacetate (homogentisate) at low efficiency. In Emericella nidulans (Aspergillus nidulans), this protein is Phenylacetate 2-hydroxylase (phacA).